The following is an 882-amino-acid chain: Homeobox-leucine zipper protein ROC3 (882 aa).

The segment at 104 to 144 (DVDDDHKPQHSGHDQPPDAAQPSGAAGGNAKKKRYHRHTAH) is disordered. The span at 107-119 (DDHKPQHSGHDQP) shows a compositional bias: basic and acidic residues. Basic residues predominate over residues 133–143 (AKKKRYHRHTA). Residues 134 to 193 (KKKRYHRHTAHQIQQMEALFKECPHPDDKQRLKLSQELGLKPRQVKFWFQNRRTQMKAQQ) constitute a DNA-binding region (homeobox). A coiled-coil region spans residues 200 to 263 (ILRAENENLK…LDRLACIATR (64 aa)). The START domain occupies 340–584 (QEQDKQLVVD…LQRQCERLAS (245 aa)). Over residues 782–816 (AAAPTISSSTTTTTGNGNGETSSTPPRNSSSNNNN) the composition is skewed to low complexity. The segment at 782–820 (AAAPTISSSTTTTTGNGNGETSSTPPRNSSSNNNNADEL) is disordered.

This sequence belongs to the HD-ZIP homeobox family. Class IV subfamily.

It is found in the nucleus. In terms of biological role, probable transcription factor. The polypeptide is Homeobox-leucine zipper protein ROC3 (ROC3) (Oryza sativa subsp. indica (Rice)).